A 385-amino-acid polypeptide reads, in one-letter code: Putative F-box protein At1g49610 (385 aa).

In terms of domain architecture, F-box spans 25–73; it reads VDSISSLPDVILQENLSLIPTKFAIRTSVLSKRWRHVWSETPSLDFDDC.

In Arabidopsis thaliana (Mouse-ear cress), this protein is Putative F-box protein At1g49610.